The sequence spans 240 residues: Membrane-spanning 4-domains subfamily A member 15 (240 aa).

4 consecutive transmembrane segments (helical) span residues 73–93 (VLGT…SVLL), 100–120 (VGIF…FIIS), 144–164 (ILSV…FGVT), and 173–193 (LAVL…AMHF).

Belongs to the MS4A family.

It localises to the membrane. Functionally, may be involved in signal transduction as a component of a multimeric receptor complex. The chain is Membrane-spanning 4-domains subfamily A member 15 (MS4A15) from Homo sapiens (Human).